Here is a 261-residue protein sequence, read N- to C-terminus: Kynurenine formamidase (261 aa).

Ser9 carries the phosphoserine modification. The HGGXW signature appears at 36 to 40; it reads HGGAW. The active-site Nucleophile is Ser110. Active-site residues include Asp211 and His243.

This sequence belongs to the kynurenine formamidase family. In terms of assembly, homodimer.

It catalyses the reaction N-formyl-L-kynurenine + H2O = L-kynurenine + formate + H(+). Its pathway is amino-acid degradation; L-tryptophan degradation via kynurenine pathway; L-kynurenine from L-tryptophan: step 2/2. Its function is as follows. Catalyzes the hydrolysis of N-formyl-L-kynurenine to L-kynurenine, the second step in the kynurenine pathway of tryptophan degradation. Kynurenine may be further oxidized to nicotinic acid, NAD(H) and NADP(H). Required for elimination of toxic metabolites. This is Kynurenine formamidase from Saccharomyces cerevisiae (strain ATCC 204508 / S288c) (Baker's yeast).